A 251-amino-acid polypeptide reads, in one-letter code: Ubiquinone/menaquinone biosynthesis C-methyltransferase UbiE (251 aa).

Residues T74, D95, 123-124, and S140 contribute to the S-adenosyl-L-methionine site; that span reads NA.

The protein belongs to the class I-like SAM-binding methyltransferase superfamily. MenG/UbiE family.

The enzyme catalyses a 2-demethylmenaquinol + S-adenosyl-L-methionine = a menaquinol + S-adenosyl-L-homocysteine + H(+). The catalysed reaction is a 2-methoxy-6-(all-trans-polyprenyl)benzene-1,4-diol + S-adenosyl-L-methionine = a 5-methoxy-2-methyl-3-(all-trans-polyprenyl)benzene-1,4-diol + S-adenosyl-L-homocysteine + H(+). It participates in quinol/quinone metabolism; menaquinone biosynthesis; menaquinol from 1,4-dihydroxy-2-naphthoate: step 2/2. It functions in the pathway cofactor biosynthesis; ubiquinone biosynthesis. Functionally, methyltransferase required for the conversion of demethylmenaquinol (DMKH2) to menaquinol (MKH2) and the conversion of 2-polyprenyl-6-methoxy-1,4-benzoquinol (DDMQH2) to 2-polyprenyl-3-methyl-6-methoxy-1,4-benzoquinol (DMQH2). This Pectobacterium carotovorum subsp. carotovorum (strain PC1) protein is Ubiquinone/menaquinone biosynthesis C-methyltransferase UbiE.